We begin with the raw amino-acid sequence, 1002 residues long: yemanuclein (1002 aa).

The Nuclear localization signal motif lies at 80–85 (KKKTKK). Disordered regions lie at residues 193–358 (AIIK…KKVV), 395–428 (VSTD…GQEN), and 642–725 (KLKA…AKQV). A compositionally biased stretch (low complexity) spans 207–217 (SSSSESSSSSS). A compositionally biased stretch (acidic residues) spans 218-262 (GDDDENDDGNNEEDDESDSEDDSEENDESDSEDDSESESLEDEDS). A run of 2 repeats spans residues 230 to 241 (EDDESDSEDDSE) and 242 to 253 (ENDESDSEDDSE). The segment at 230-253 (EDDESDSEDDSEENDESDSEDDSE) is 2 X 12 AA tandem repeats. 3 stretches are compositionally biased toward low complexity: residues 286–320 (TGKS…RPST), 336–358 (QPSS…KKVV), and 395–404 (VSTDVSSSDS). Residues 408-427 (ESEHGRADRQAGQHGKDGQE) show a composition bias toward basic and acidic residues. Residues 653 to 667 (PASASPKPVGVVSAP) are compositionally biased toward low complexity. The segment covering 679–689 (AVEDPRSRGNS) has biased composition (basic and acidic residues). S685 and S689 each carry phosphoserine. Over residues 690–701 (DTDSATSASSNS) the composition is skewed to low complexity. 3 positions are modified to phosphoserine: S885, S886, and S887. The disordered stretch occupies residues 901 to 928 (SKPQKKVQSKPKNKTQNRGRSSLGAVGQ). Residues 903 to 917 (PQKKVQSKPKNKTQN) are compositionally biased toward basic residues.

Post-translationally, the N-terminus is blocked. In terms of tissue distribution, oocyte specific.

It is found in the nucleus. The protein resides in the nucleoplasm. The protein localises to the chromosome. It localises to the centromere. Its subcellular location is the kinetochore. Its function is as follows. May play a key role in egg organization. May be a transcriptional regulator having a role in chromatin remodeling in concert with Hira, a histone chaperone. Involved in chromosome segregation by affecting kinetochores function in the first meiotic division. The sequence is that of yemanuclein from Drosophila melanogaster (Fruit fly).